We begin with the raw amino-acid sequence, 209 residues long: Phosphopantothenoylcysteine decarboxylase (209 aa).

FMN is bound by residues 28-30 and 53-55; these read GSV and TKS. Residue H90 is the Proton donor of the active site. FMN-binding positions include 106–109 and A140; that span reads SANT. N-[(R)-4-phosphopantothenoyl]-L-cysteine is bound by residues N142, R172, and A174. The active-site Proton donor is C175. Residue M183 coordinates N-[(R)-4-phosphopantothenoyl]-L-cysteine.

Belongs to the HFCD (homooligomeric flavin containing Cys decarboxylase) superfamily. In terms of assembly, homotrimer. FMN is required as a cofactor. As to expression, expressed in roots, shoots, leaves, flowers, developing siliques and seeds with highest expression in seed embryos and phloem.

It carries out the reaction N-[(R)-4-phosphopantothenoyl]-L-cysteine + H(+) = (R)-4'-phosphopantetheine + CO2. The protein operates within cofactor biosynthesis; coenzyme A biosynthesis; CoA from (R)-pantothenate: step 3/5. Involved in plant growth, and salt and osmotic tolerance. Catalyzes the decarboxylation of 4'-phosphopantothenoylcysteine to 4'-phosphopantetheine, a key step in coenzyme A biosynthesis. The enzyme is also able to decarboxylate pantothenoylcysteine to pantothenoylcysteamine. This is Phosphopantothenoylcysteine decarboxylase from Arabidopsis thaliana (Mouse-ear cress).